A 351-amino-acid chain; its full sequence is Homoserine O-acetyltransferase (351 aa).

The 284-residue stretch at 51–334 folds into the AB hydrolase-1 domain; sequence VIWVLHALTG…IYGHDAFLIE (284 aa). Serine 146 (nucleophile) is an active-site residue. Arginine 212 serves as a coordination point for substrate. Residues aspartate 299 and histidine 328 contribute to the active site. Residue aspartate 329 participates in substrate binding.

It belongs to the AB hydrolase superfamily. MetX family. As to quaternary structure, homodimer.

The protein localises to the cytoplasm. It catalyses the reaction L-homoserine + acetyl-CoA = O-acetyl-L-homoserine + CoA. The protein operates within amino-acid biosynthesis; L-methionine biosynthesis via de novo pathway; O-acetyl-L-homoserine from L-homoserine: step 1/1. Its function is as follows. Transfers an acetyl group from acetyl-CoA to L-homoserine, forming acetyl-L-homoserine. The sequence is that of Homoserine O-acetyltransferase from Cyclobacterium marinum (strain ATCC 25205 / DSM 745 / LMG 13164 / NCIMB 1802) (Flectobacillus marinus).